Here is a 182-residue protein sequence, read N- to C-terminus: MQLSELRENMQKTIEATQRSFNTLRTGRASASLLDRITVEYYGAETPLKSLASISTPDSSTIMIQPFDRGSLSDVERAISMSDLGLTPNNDGTNIRLNIPPLTKERRQELVKTAGKLAEEGKVALRNIRRDAIDDVRKQEKNSDISEDESRSLQDDIQKVTDEFTTKIDDLLKIKEKDIMTV.

Belongs to the RRF family.

The protein localises to the cytoplasm. Its function is as follows. Responsible for the release of ribosomes from messenger RNA at the termination of protein biosynthesis. May increase the efficiency of translation by recycling ribosomes from one round of translation to another. The protein is Ribosome-recycling factor of Picosynechococcus sp. (strain ATCC 27264 / PCC 7002 / PR-6) (Agmenellum quadruplicatum).